The primary structure comprises 88 residues: Small ribosomal subunit protein uS17c (88 aa).

This sequence belongs to the universal ribosomal protein uS17 family. Part of the 30S ribosomal subunit.

The protein localises to the plastid. It localises to the cyanelle. Functionally, one of the primary rRNA binding proteins, it binds specifically to the 5'-end of 16S ribosomal RNA. The protein is Small ribosomal subunit protein uS17c (rps17) of Cyanophora paradoxa.